The primary structure comprises 246 residues: Ribonuclease PH (246 aa).

Residues arginine 91 and 129-131 (GTR) contribute to the phosphate site.

The protein belongs to the RNase PH family. In terms of assembly, homohexameric ring arranged as a trimer of dimers.

It carries out the reaction tRNA(n+1) + phosphate = tRNA(n) + a ribonucleoside 5'-diphosphate. Phosphorolytic 3'-5' exoribonuclease that plays an important role in tRNA 3'-end maturation. Removes nucleotide residues following the 3'-CCA terminus of tRNAs; can also add nucleotides to the ends of RNA molecules by using nucleoside diphosphates as substrates, but this may not be physiologically important. Probably plays a role in initiation of 16S rRNA degradation (leading to ribosome degradation) during starvation. This is Ribonuclease PH from Burkholderia cenocepacia (strain ATCC BAA-245 / DSM 16553 / LMG 16656 / NCTC 13227 / J2315 / CF5610) (Burkholderia cepacia (strain J2315)).